The chain runs to 96 residues: UPF0235 protein YggU (96 aa).

It belongs to the UPF0235 family.

This is UPF0235 protein YggU from Salmonella typhimurium (strain LT2 / SGSC1412 / ATCC 700720).